Reading from the N-terminus, the 251-residue chain is Mlc titration factor A (251 aa).

Positions 111, 148, 152, and 211 each coordinate Zn(2+).

The protein belongs to the MtfA family. Interacts with Mlc. Requires Zn(2+) as cofactor.

It localises to the cytoplasm. Functionally, involved in the modulation of the activity of the glucose-phosphotransferase system (glucose-PTS). Interacts with the transcriptional repressor Mlc, preventing its interaction with DNA and leading to the modulation of expression of genes regulated by Mlc, including ptsG, which encodes the PTS system glucose-specific EIICB component. Shows zinc-dependent metallopeptidase activity. In Salmonella arizonae (strain ATCC BAA-731 / CDC346-86 / RSK2980), this protein is Mlc titration factor A.